We begin with the raw amino-acid sequence, 131 residues long: Small ribosomal subunit protein bS6 (131 aa).

The interval 97–131 (TEASPMVKAKDERRRDVAEDLDEEEVDDVAEDSEE) is disordered. Basic and acidic residues predominate over residues 104–114 (KAKDERRRDVA). The segment covering 115 to 131 (EDLDEEEVDDVAEDSEE) has biased composition (acidic residues).

Belongs to the bacterial ribosomal protein bS6 family.

Its function is as follows. Binds together with bS18 to 16S ribosomal RNA. The protein is Small ribosomal subunit protein bS6 of Proteus mirabilis (strain HI4320).